An 825-amino-acid polypeptide reads, in one-letter code: PR domain zinc finger protein 1 (825 aa).

The SET domain occupies 84-201 (PRNLLFKYAT…ANQELLVWYC (118 aa)). Residues 324–361 (ITRSPIPSSTTPSPSARSSPDQSLKSSSPHSSPGNTVS) show a composition bias toward low complexity. Positions 324–369 (ITRSPIPSSTTPSPSARSSPDQSLKSSSPHSSPGNTVSPVGPGSQE) are disordered. The interval 527–574 (HVVQPKATSAAMAAPSSDEAMNLIKNKRNMTGYKTLPYPLKKQNGKIK) is interaction with PIAS1. 4 C2H2-type zinc fingers span residues 575–597 (YECN…LRVH), 603–625 (FKCQ…YLVH), 631–653 (HECQ…LRLH), and 659–681 (YQCK…KRLH). A Glycyl lysine isopeptide (Lys-Gly) (interchain with G-Cter in SUMO1); alternate cross-link involves residue Lys816. A Glycyl lysine isopeptide (Lys-Gly) (interchain with G-Cter in SUMO2); alternate cross-link involves residue Lys816.

The protein belongs to the class V-like SAM-binding methyltransferase superfamily. Interacts with PRMT5. Interacts with FBXO10. Interacts with FBXO11. Interacts with multiple nuclear sumoylation E3 ligases, including CBX4, PIAS1, PIAS2, PIAS3, PIAS4, PML and RNF4, but not RANBP2. Interacts with LDB1, SMARCD3 and SMARCC1. Interacts with EEIG1; following TNFSF11/RANKL stimulation in bone marrow-derived macrophages, the interaction promotes the binding of PRDM1/BLIMP1 to the gene promoter of IRF8. Sumoylation at Lys-816 by PIAS1 augments transcriptional repressor activity, and is critical for plasma cell differentiation. Can be sumoylated with SUMO1 and SUMO2 by PML. Degradation of the wild-type protein mostly depends upon sumoylation, rather than ubiquitination. Desumoylated by SENP1 and SENP6. In terms of processing, ubiquitinated by the SCF(FBXO11) complex, leading to its degradation by the proteasome.

It localises to the nucleus. Its subcellular location is the cytoplasm. Its function is as follows. Transcription factor that mediates a transcriptional program in various innate and adaptive immune tissue-resident lymphocyte T cell types such as tissue-resident memory T (Trm), natural killer (trNK) and natural killer T (NKT) cells and negatively regulates gene expression of proteins that promote the egress of tissue-resident T-cell populations from non-lymphoid organs. Plays a role in the development, retention and long-term establishment of adaptive and innate tissue-resident lymphocyte T cell types in non-lymphoid organs, such as the skin and gut, but also in other nonbarrier tissues like liver and kidney, and therefore may provide immediate immunological protection against reactivating infections or viral reinfection. Binds specifically to the PRDI element in the promoter of the beta-interferon gene. Drives the maturation of B-lymphocytes into Ig secreting cells. Associates with the transcriptional repressor ZNF683 to chromatin at gene promoter regions. Binds to the promoter and acts as a transcriptional repressor of IRF8, thereby promotes transcription of osteoclast differentiation factors such as NFATC1 and EEIG1. This is PR domain zinc finger protein 1 (PRDM1) from Homo sapiens (Human).